A 224-amino-acid polypeptide reads, in one-letter code: UPF0758 protein Patl_0046 (224 aa).

The 123-residue stretch at 102–224 (VFNSAQQTKH…AVSFAERGLI (123 aa)) folds into the MPN domain. Residues H173, H175, and D186 each contribute to the Zn(2+) site. Positions 173-186 (HNHPSGVAEPSQAD) match the JAMM motif motif.

This sequence belongs to the UPF0758 family.

This Pseudoalteromonas atlantica (strain T6c / ATCC BAA-1087) protein is UPF0758 protein Patl_0046.